The sequence spans 124 residues: MALHSAIKGKLISVIGDEDTCVGFLLGGVGEINKNRHPNFMVVDKNTPVSELEDCFKRFLKRDDIDIILINQNCAELIRHVIDAHTSPVPAVLEIPSKDHPYDASKDSILRRARGMFNPEDLVR.

It belongs to the V-ATPase F subunit family. In terms of assembly, V-ATPase is a heteromultimeric enzyme made up of two complexes: the ATP-hydrolytic V1 complex and the proton translocation V0 complex. The V1 complex consists of three catalytic AB heterodimers that form a heterohexamer, three peripheral stalks each consisting of EG heterodimers, one central rotor including subunits D and F, and the regulatory subunits C and H. The proton translocation complex V0 consists of the proton transport subunit a, a ring of proteolipid subunits c9c'', rotary subunit d, subunits e and f, and the accessory subunits VhaAC45 and ATP6AP2.

Subunit of the V1 complex of vacuolar(H+)-ATPase (V-ATPase), a multisubunit enzyme composed of a peripheral complex (V1) that hydrolyzes ATP and a membrane integral complex (V0) that translocates protons. V-ATPase is responsible for acidifying and maintaining the pH of intracellular compartments and in some cell types, is targeted to the plasma membrane, where it is responsible for acidifying the extracellular environment. The chain is V-type proton ATPase subunit F 1 (Vha14) from Drosophila pseudoobscura pseudoobscura (Fruit fly).